The primary structure comprises 348 residues: Probable dual-specificity RNA methyltransferase RlmN (348 aa).

E89 (proton acceptor) is an active-site residue. Residues 95-328 form the Radical SAM core domain; that stretch reads HKNRNTVCVS…VTLRISYGSR (234 aa). A disulfide bridge connects residues C102 and C333. The [4Fe-4S] cluster site is built by C109, C113, and C116. Residues 159 to 160, S191, 214 to 216, and N290 each bind S-adenosyl-L-methionine; these read GE and SLH. C333 acts as the S-methylcysteine intermediate in catalysis.

It belongs to the radical SAM superfamily. RlmN family. [4Fe-4S] cluster serves as cofactor.

The protein localises to the cytoplasm. It catalyses the reaction adenosine(2503) in 23S rRNA + 2 reduced [2Fe-2S]-[ferredoxin] + 2 S-adenosyl-L-methionine = 2-methyladenosine(2503) in 23S rRNA + 5'-deoxyadenosine + L-methionine + 2 oxidized [2Fe-2S]-[ferredoxin] + S-adenosyl-L-homocysteine. The catalysed reaction is adenosine(37) in tRNA + 2 reduced [2Fe-2S]-[ferredoxin] + 2 S-adenosyl-L-methionine = 2-methyladenosine(37) in tRNA + 5'-deoxyadenosine + L-methionine + 2 oxidized [2Fe-2S]-[ferredoxin] + S-adenosyl-L-homocysteine. Specifically methylates position 2 of adenine 2503 in 23S rRNA and position 2 of adenine 37 in tRNAs. This Dictyoglomus thermophilum (strain ATCC 35947 / DSM 3960 / H-6-12) protein is Probable dual-specificity RNA methyltransferase RlmN.